The sequence spans 182 residues: Probable inosine/xanthosine triphosphatase (182 aa).

Positions 42 and 69 each coordinate Mg(2+).

Belongs to the YjjX NTPase family. In terms of assembly, homodimer. Mg(2+) serves as cofactor. The cofactor is Mn(2+).

It catalyses the reaction XTP + H2O = XDP + phosphate + H(+). The catalysed reaction is ITP + H2O = IDP + phosphate + H(+). Phosphatase that hydrolyzes non-canonical purine nucleotides such as XTP and ITP to their respective diphosphate derivatives. Probably excludes non-canonical purines from DNA/RNA precursor pool, thus preventing their incorporation into DNA/RNA and avoiding chromosomal lesions. The protein is Probable inosine/xanthosine triphosphatase of Methanothermobacter thermautotrophicus (strain ATCC 29096 / DSM 1053 / JCM 10044 / NBRC 100330 / Delta H) (Methanobacterium thermoautotrophicum).